We begin with the raw amino-acid sequence, 253 residues long: Imidazole glycerol phosphate synthase subunit HisF (253 aa).

Active-site residues include D11 and D130.

The protein belongs to the HisA/HisF family. Heterodimer of HisH and HisF.

Its subcellular location is the cytoplasm. It catalyses the reaction 5-[(5-phospho-1-deoxy-D-ribulos-1-ylimino)methylamino]-1-(5-phospho-beta-D-ribosyl)imidazole-4-carboxamide + L-glutamine = D-erythro-1-(imidazol-4-yl)glycerol 3-phosphate + 5-amino-1-(5-phospho-beta-D-ribosyl)imidazole-4-carboxamide + L-glutamate + H(+). The protein operates within amino-acid biosynthesis; L-histidine biosynthesis; L-histidine from 5-phospho-alpha-D-ribose 1-diphosphate: step 5/9. Functionally, IGPS catalyzes the conversion of PRFAR and glutamine to IGP, AICAR and glutamate. The HisF subunit catalyzes the cyclization activity that produces IGP and AICAR from PRFAR using the ammonia provided by the HisH subunit. The protein is Imidazole glycerol phosphate synthase subunit HisF of Lysinibacillus sphaericus (strain C3-41).